A 569-amino-acid polypeptide reads, in one-letter code: Protein AF-9 (569 aa).

A YEATS domain is found at 1 to 138 (MASSCAVQVK…EDFRRKLLKA (138 aa)). Positions 138 to 476 (AGGDPNRSIH…PPPPLLKTNN (339 aa)) are disordered. Low complexity predominate over residues 149 to 190 (SSSSSSSSSSSSSSSSSSSSSSSSSSSSSSSSSSSSSSSSSS). A compositionally biased stretch (basic and acidic residues) spans 202–265 (EHKEKPSKDS…PKPMSKEPKA (64 aa)). Phosphoserine occurs at positions 289 and 295. A Nuclear localization signal motif is present at residues 296–301 (AKKRKK). A compositionally biased stretch (low complexity) spans 304–314 (SEALFKSFSSA). Residues 323 to 350 (ADKKQIKDKSHVKMGKVKIESETSEKKK) are compositionally biased toward basic and acidic residues. Lys-340 participates in a covalent cross-link: Glycyl lysine isopeptide (Lys-Gly) (interchain with G-Cter in SUMO2). The span at 358-369 (DIVDPNDSDVEE) shows a compositional bias: acidic residues. Low complexity predominate over residues 372-396 (SSKSDSEQPSPASSSSSSSSSFTPS). Ser-413 and Ser-420 each carry phosphoserine. Positions 415–430 (DNEEESDEAEDNDNDS) are enriched in acidic residues. Residues 446–462 (VSLSDGSDSESSSASSP) show a composition bias toward low complexity. Phosphoserine is present on Ser-484.

In terms of assembly, component of the super elongation complex (SEC), at least composed of EAF1, EAF2, CDK9, MLLT3/AF9, AFF (AFF1 or AFF4), the P-TEFb complex and ELL (ELL, ELL2 or ELL3). Interacts with BCOR. Interacts with CBX8. Interacts with ALKBH4. Ubiquitously expressed. Strong expression in the spleen.

Its subcellular location is the nucleus. The protein resides in the chromosome. In terms of biological role, chromatin reader component of the super elongation complex (SEC), a complex required to increase the catalytic rate of RNA polymerase II transcription by suppressing transient pausing by the polymerase at multiple sites along the DNA. Specifically recognizes and binds acylated histone H3, with a preference for histone H3 that is crotonylated. Crotonylation marks active promoters and enhancers and confers resistance to transcriptional repressors. Recognizes and binds histone H3 crotonylated at 'Lys-9' (H3K9cr), and with slightly lower affinity histone H3 crotonylated at 'Lys-18' (H3K18cr). Also recognizes and binds histone H3 acetylated and butyrylated at 'Lys-9' (H3K9ac and H3K9bu, respectively), but with lower affinity than crotonylated histone H3. In the SEC complex, MLLT3 is required to recruit the complex to crotonylated histones. Recruitment of the SEC complex to crotonylated histones promotes recruitment of DOT1L on active chromatin to deposit histone H3 'Lys-79' methylation (H3K79me). Plays a key role in hematopoietic stem cell (HSC) maintenance by preserving, rather than conferring, HSC stemness. Acts by binding to the transcription start site of active genes in HSCs and sustaining level of H3K79me2, probably by recruiting DOT1L. The sequence is that of Protein AF-9 (Mllt3) from Mus musculus (Mouse).